We begin with the raw amino-acid sequence, 380 residues long: Chaperone protein DnaJ (380 aa).

Residues 4–68 form the J domain; that stretch reads DFYSVLGVSR…EKRRMYDQMG (65 aa). A compositionally biased stretch (basic and acidic residues) spans 27–87; that stretch reads KASEYHPDVS…RGATDTDRGR (61 aa). Positions 27 to 126 are disordered; sequence KASEYHPDVS…SRSGPRQGSD (100 aa). Positions 88 to 100 are enriched in gly residues; the sequence is GGMGGMGGGGMGG. A compositionally biased stretch (low complexity) spans 115–124; that stretch reads SQSRSGPRQG. Residues 141–223 form a CR-type zinc finger; the sequence is GVTKQLTVTR…CRGDGQVRNE (83 aa). Cys154, Cys157, Cys171, Cys174, Cys197, Cys200, Cys211, and Cys214 together coordinate Zn(2+). 4 CXXCXGXG motif repeats span residues 154-161, 171-178, 197-204, and 211-218; these read CPDCDGAG, CSACDGRG, CPQCDGKG, and CSTCRGDG.

This sequence belongs to the DnaJ family. Homodimer. Zn(2+) is required as a cofactor.

It is found in the cytoplasm. Functionally, participates actively in the response to hyperosmotic and heat shock by preventing the aggregation of stress-denatured proteins and by disaggregating proteins, also in an autonomous, DnaK-independent fashion. Unfolded proteins bind initially to DnaJ; upon interaction with the DnaJ-bound protein, DnaK hydrolyzes its bound ATP, resulting in the formation of a stable complex. GrpE releases ADP from DnaK; ATP binding to DnaK triggers the release of the substrate protein, thus completing the reaction cycle. Several rounds of ATP-dependent interactions between DnaJ, DnaK and GrpE are required for fully efficient folding. Also involved, together with DnaK and GrpE, in the DNA replication of plasmids through activation of initiation proteins. The protein is Chaperone protein DnaJ of Natronomonas pharaonis (strain ATCC 35678 / DSM 2160 / CIP 103997 / JCM 8858 / NBRC 14720 / NCIMB 2260 / Gabara) (Halobacterium pharaonis).